Consider the following 109-residue polypeptide: ATPase inhibitor mai-2, mitochondrial (109 aa).

Disordered stretches follow at residues 17-39 and 73-95; these read RFST…SIRD and QEVD…HQKR. The span at 21–35 shows a compositional bias: gly residues; sequence GGHGDGAGRGGGSGG. Residues 45–109 are a coiled coil; that stretch reads GKMEAAREDE…EAEERALGKE (65 aa).

It belongs to the ATPase inhibitor family.

It localises to the mitochondrion. Functionally, thought to be a regulatory component of the ATP-synthesizing complex in the mitochondria. The polypeptide is ATPase inhibitor mai-2, mitochondrial (Caenorhabditis briggsae).